The sequence spans 65 residues: MDAFTDFSILADGLASLGDESSHTILAEFSPSILDGPFVADSAPLTEAPCNHDQIADYGSYCVVA.

Position 62 is a cysteine methyl ester (Cys62). A lipid anchor (S-farnesyl cysteine) is attached at Cys62. A propeptide spans 63–65 (VVA) (removed in mature form).

It is found in the cell membrane. Its function is as follows. Activates B-regulated development. The chain is Mating-type pheromone BBP1(2) (BBP1(2)) from Schizophyllum commune (Split gill fungus).